Here is a 569-residue protein sequence, read N- to C-terminus: Urease subunit alpha (569 aa).

One can recognise a Urease domain in the interval 131 to 569 (GGMDAHIHYI…LPMAQRYFLF (439 aa)). Ni(2+) is bound by residues histidine 136, histidine 138, and lysine 218. Lysine 218 carries the post-translational modification N6-carboxylysine. Histidine 220 contributes to the substrate binding site. Positions 247 and 273 each coordinate Ni(2+). Histidine 321 acts as the Proton donor in catalysis. Aspartate 361 contributes to the Ni(2+) binding site.

Belongs to the metallo-dependent hydrolases superfamily. Urease alpha subunit family. Heterotrimer of UreA (gamma), UreB (beta) and UreC (alpha) subunits. Three heterotrimers associate to form the active enzyme. Requires Ni cation as cofactor. In terms of processing, carboxylation allows a single lysine to coordinate two nickel ions.

The protein resides in the cytoplasm. The enzyme catalyses urea + 2 H2O + H(+) = hydrogencarbonate + 2 NH4(+). It participates in nitrogen metabolism; urea degradation; CO(2) and NH(3) from urea (urease route): step 1/1. This chain is Urease subunit alpha, found in Agrobacterium fabrum (strain C58 / ATCC 33970) (Agrobacterium tumefaciens (strain C58)).